Reading from the N-terminus, the 421-residue chain is UDP-N-acetylglucosamine 1-carboxyvinyltransferase (421 aa).

22–23 is a phosphoenolpyruvate binding site; the sequence is KN. Position 93 (arginine 93) interacts with UDP-N-acetyl-alpha-D-glucosamine. Residue cysteine 117 is the Proton donor of the active site. Cysteine 117 is modified (2-(S-cysteinyl)pyruvic acid O-phosphothioketal). Residues 122-126, aspartate 308, and valine 330 each bind UDP-N-acetyl-alpha-D-glucosamine; that span reads RPVDL.

It belongs to the EPSP synthase family. MurA subfamily.

It localises to the cytoplasm. It catalyses the reaction phosphoenolpyruvate + UDP-N-acetyl-alpha-D-glucosamine = UDP-N-acetyl-3-O-(1-carboxyvinyl)-alpha-D-glucosamine + phosphate. The protein operates within cell wall biogenesis; peptidoglycan biosynthesis. Its function is as follows. Cell wall formation. Adds enolpyruvyl to UDP-N-acetylglucosamine. This Stutzerimonas stutzeri (strain A1501) (Pseudomonas stutzeri) protein is UDP-N-acetylglucosamine 1-carboxyvinyltransferase.